Reading from the N-terminus, the 252-residue chain is Phosphatidylserine decarboxylase proenzyme (252 aa).

Residue Ser-211 is the Schiff-base intermediate with substrate; via pyruvic acid of the active site. Residue Ser-211 is modified to Pyruvic acid (Ser); by autocatalysis.

The protein belongs to the phosphatidylserine decarboxylase family. PSD-A subfamily. In terms of assembly, heterodimer of a large membrane-associated beta subunit and a small pyruvoyl-containing alpha subunit. Pyruvate serves as cofactor. Post-translationally, is synthesized initially as an inactive proenzyme. Formation of the active enzyme involves a self-maturation process in which the active site pyruvoyl group is generated from an internal serine residue via an autocatalytic post-translational modification. Two non-identical subunits are generated from the proenzyme in this reaction, and the pyruvate is formed at the N-terminus of the alpha chain, which is derived from the carboxyl end of the proenzyme. The post-translation cleavage follows an unusual pathway, termed non-hydrolytic serinolysis, in which the side chain hydroxyl group of the serine supplies its oxygen atom to form the C-terminus of the beta chain, while the remainder of the serine residue undergoes an oxidative deamination to produce ammonia and the pyruvoyl prosthetic group on the alpha chain.

The protein localises to the cell membrane. It carries out the reaction a 1,2-diacyl-sn-glycero-3-phospho-L-serine + H(+) = a 1,2-diacyl-sn-glycero-3-phosphoethanolamine + CO2. The protein operates within phospholipid metabolism; phosphatidylethanolamine biosynthesis; phosphatidylethanolamine from CDP-diacylglycerol: step 2/2. Its function is as follows. Catalyzes the formation of phosphatidylethanolamine (PtdEtn) from phosphatidylserine (PtdSer). This chain is Phosphatidylserine decarboxylase proenzyme, found in Novosphingobium aromaticivorans (strain ATCC 700278 / DSM 12444 / CCUG 56034 / CIP 105152 / NBRC 16084 / F199).